Consider the following 198-residue polypeptide: Type 1 fimbriae regulatory protein FimE (198 aa).

Positions 2–184 (SKRRYLTGKE…NAARFAGLWE (183 aa)) constitute a Tyr recombinase domain. Catalysis depends on residues Arg41, Lys66, His136, Arg139, and His162. Catalysis depends on Tyr171, which acts as the O-(3'-phospho-DNA)-tyrosine intermediate.

This sequence belongs to the 'phage' integrase family.

FimE is one of the 2 regulatory proteins which control the phase variation of type 1 fimbriae in E.coli. These proteins mediate the periodic inversion of a 300bp DNA segment that harbors the promoter for the fimbrial structural gene, fimA. FimE switches fimA off. The polypeptide is Type 1 fimbriae regulatory protein FimE (fimE) (Escherichia coli O6:H1 (strain CFT073 / ATCC 700928 / UPEC)).